A 256-amino-acid polypeptide reads, in one-letter code: Large ribosomal subunit protein bL28m (256 aa).

The N-terminal 55 residues, 1–55 (MPLHKVPVGLWKRLRLREGIYSRLPAHYLRSLEEARTPTPVHFRPHGAKFKINPK), are a transit peptide targeting the mitochondrion.

It belongs to the bacterial ribosomal protein bL28 family. As to quaternary structure, component of the mitochondrial ribosome large subunit (39S) which comprises a 16S rRNA and about 50 distinct proteins. Interacts with OXA1L.

Its subcellular location is the mitochondrion. The chain is Large ribosomal subunit protein bL28m (MRPL28) from Bos taurus (Bovine).